The sequence spans 258 residues: Imidazole glycerol phosphate synthase subunit HisF (258 aa).

Residues Asp11 and Asp130 contribute to the active site.

Belongs to the HisA/HisF family. In terms of assembly, heterodimer of HisH and HisF.

The protein localises to the cytoplasm. It carries out the reaction 5-[(5-phospho-1-deoxy-D-ribulos-1-ylimino)methylamino]-1-(5-phospho-beta-D-ribosyl)imidazole-4-carboxamide + L-glutamine = D-erythro-1-(imidazol-4-yl)glycerol 3-phosphate + 5-amino-1-(5-phospho-beta-D-ribosyl)imidazole-4-carboxamide + L-glutamate + H(+). It functions in the pathway amino-acid biosynthesis; L-histidine biosynthesis; L-histidine from 5-phospho-alpha-D-ribose 1-diphosphate: step 5/9. Functionally, IGPS catalyzes the conversion of PRFAR and glutamine to IGP, AICAR and glutamate. The HisF subunit catalyzes the cyclization activity that produces IGP and AICAR from PRFAR using the ammonia provided by the HisH subunit. This chain is Imidazole glycerol phosphate synthase subunit HisF, found in Magnetococcus marinus (strain ATCC BAA-1437 / JCM 17883 / MC-1).